We begin with the raw amino-acid sequence, 335 residues long: Basic endochitinase B (335 aa).

The first 33 residues, 1–33, serve as a signal peptide directing secretion; that stretch reads MPPQKENHRTLNKMKTNLFLFLIFSLLLSLSSA. The Chitin-binding type-1 domain maps to 34 to 75; sequence EQCGRQAGGALCPNGLCCSEFGWCGNTEPYCKQPGCQSQCTP. 7 disulfide bridges follow: C36–C51, C45–C57, C50–C64, C69–C73, C107–C169, C181–C189, and C288–C320. The active-site Proton donor is the E151. Positions 329–335 are cleaved as a propeptide — removed in mature form; the sequence is GLLEAAI. Positions 329–335 match the Vacuolar targeting signal motif; sequence GLLEAAI.

The protein belongs to the glycosyl hydrolase 19 family. Chitinase class I subfamily. High constitutive level in roots with lower levels in leaves and flowering shoots.

The protein resides in the vacuole. The enzyme catalyses Random endo-hydrolysis of N-acetyl-beta-D-glucosaminide (1-&gt;4)-beta-linkages in chitin and chitodextrins.. In terms of biological role, defense against chitin-containing fungal pathogens. Seems particularly implicated in resistance to jasmonate-inducing pathogens such as A.brassicicola. In vitro antifungal activity against T.reesei, but not against A.solani, F.oxysporum, S.sclerotiorum, G.graminis and P.megasperma. This is Basic endochitinase B (CHI-B) from Arabidopsis thaliana (Mouse-ear cress).